We begin with the raw amino-acid sequence, 342 residues long: Ketol-acid reductoisomerase (NADP(+)) (342 aa).

In terms of domain architecture, KARI N-terminal Rossmann spans 2–181; it reads VKVYYNGDIK…GGARAGVLET (180 aa). NADP(+) contacts are provided by residues 25 to 28, arginine 48, serine 52, and 82 to 85; these read YGSQ and DEQQ. The active site involves histidine 107. Residue glycine 133 participates in NADP(+) binding. The KARI C-terminal knotted domain occupies 182 to 327; the sequence is TFKEETETDL…RKLREMMPFV (146 aa). 4 residues coordinate Mg(2+): aspartate 190, glutamate 194, glutamate 226, and glutamate 230. Serine 251 is a binding site for substrate.

It belongs to the ketol-acid reductoisomerase family. Mg(2+) serves as cofactor.

It carries out the reaction (2R)-2,3-dihydroxy-3-methylbutanoate + NADP(+) = (2S)-2-acetolactate + NADPH + H(+). It catalyses the reaction (2R,3R)-2,3-dihydroxy-3-methylpentanoate + NADP(+) = (S)-2-ethyl-2-hydroxy-3-oxobutanoate + NADPH + H(+). The protein operates within amino-acid biosynthesis; L-isoleucine biosynthesis; L-isoleucine from 2-oxobutanoate: step 2/4. It functions in the pathway amino-acid biosynthesis; L-valine biosynthesis; L-valine from pyruvate: step 2/4. In terms of biological role, involved in the biosynthesis of branched-chain amino acids (BCAA). Catalyzes an alkyl-migration followed by a ketol-acid reduction of (S)-2-acetolactate (S2AL) to yield (R)-2,3-dihydroxy-isovalerate. In the isomerase reaction, S2AL is rearranged via a Mg-dependent methyl migration to produce 3-hydroxy-3-methyl-2-ketobutyrate (HMKB). In the reductase reaction, this 2-ketoacid undergoes a metal-dependent reduction by NADPH to yield (R)-2,3-dihydroxy-isovalerate. In Bacillus subtilis (strain 168), this protein is Ketol-acid reductoisomerase (NADP(+)).